Reading from the N-terminus, the 555-residue chain is Vacuolar fusion protein MON1 homolog A (555 aa).

Residues Met-1 to Glu-12 are compositionally biased toward basic and acidic residues. The segment at Met-1–Met-87 is disordered. Ser-31 and Ser-56 each carry phosphoserine. At Thr-61 the chain carries Phosphothreonine. Ser-91 is modified (phosphoserine). Residues Pro-114–Ala-147 form a disordered region.

Belongs to the MON1/SAND family. In terms of assembly, interacts with CCZ1. Found in a complex with RMC1, CCZ1, MON1A and MON1B. The MON1A-CCZ1B complex interacts with RIMOC1. The MON1A-CCZ1B complex interacts with RAB7A and this interaction is enhanced in the presence of RIMOC1.

In terms of biological role, plays an important role in membrane trafficking through the secretory apparatus. Not involved in endocytic trafficking to lysosomes. Acts in concert with CCZ1, as a guanine exchange factor (GEF) for RAB7, promotes the exchange of GDP to GTP, converting it from an inactive GDP-bound form into an active GTP-bound form. The polypeptide is Vacuolar fusion protein MON1 homolog A (MON1A) (Macaca fascicularis (Crab-eating macaque)).